An 87-amino-acid chain; its full sequence is Cytochrome c6 (87 aa).

The heme c site is built by Cys14, Cys17, His18, and Met58.

Belongs to the cytochrome c family. PetJ subfamily. In terms of assembly, monomer. Post-translationally, binds 1 heme c group covalently per subunit.

It is found in the cellular thylakoid lumen. Its function is as follows. Functions as an electron carrier between membrane-bound cytochrome b6-f and photosystem I in oxygenic photosynthesis. The polypeptide is Cytochrome c6 (petJ) (Synechococcus elongatus).